Here is a 718-residue protein sequence, read N- to C-terminus: Sec-independent protein translocase protein TatCt (718 aa).

The next 8 membrane-spanning stretches (helical) occupy residues 34 to 54, 84 to 104, 137 to 157, 178 to 198, 214 to 231, 234 to 254, 280 to 300, and 325 to 345; these read VFIVFLVGFLGTFYALRLYVW, ILLQAKIGLVVGVLFALPPFI, LFAAGVAYGYFVFFPFTFAFL, FIFLLTLSFGLASQLPLAMTG, WRHAIVGIFAFGALFTPP, FTQIMWAVPVILLYAFSLYLA, LAGVGVVVGLLVYAFYEYGGV, and LGAFVVAGGFVGLAFGLAYLV. The segment at 421–451 is disordered; sequence REAEAADAEDEPGELEDRTTRAGGAFVSELT. Over residues 425-434 the composition is skewed to acidic residues; it reads AADAEDEPGE. Helical transmembrane passes span 478–498, 539–559, 572–592, 621–641, 661–681, and 682–702; these read AFWVVGWFMLVLATTFGWLYT, FSTILAVLATLPLVAYFVWPA, TVFVWTGALAGGLLGGFALGY, FFWLIFFTTAGIGLLADVPIL, EVTVFILAISAVFTPASITTM, and FMVTLPLMAAYGVGLGVLFVL.

It belongs to the TatC family. Forms a complex with TatA.

It is found in the cell membrane. In terms of biological role, part of the twin-arginine translocation (Tat) system that transports large folded proteins containing a characteristic twin-arginine motif in their signal peptide across membranes. The polypeptide is Sec-independent protein translocase protein TatCt (Haloferax volcanii (strain ATCC 29605 / DSM 3757 / JCM 8879 / NBRC 14742 / NCIMB 2012 / VKM B-1768 / DS2) (Halobacterium volcanii)).